The sequence spans 326 residues: Probable UDP-3-O-acyl-N-acetylglucosamine deacetylase 2, mitochondrial (326 aa).

A mitochondrion-targeting transit peptide spans 1–21; sequence MRLPVTVKATKPSFLVIWIRY. The Zn(2+) site is built by His-109, His-281, and Asp-285.

It belongs to the LpxC family. Zn(2+) is required as a cofactor.

It localises to the mitochondrion. It catalyses the reaction a UDP-3-O-[(3R)-3-hydroxyacyl]-N-acetyl-alpha-D-glucosamine + H2O = a UDP-3-O-[(3R)-3-hydroxyacyl]-alpha-D-glucosamine + acetate. It participates in glycolipid biosynthesis; lipid IV(A) biosynthesis; lipid IV(A) from (3R)-3-hydroxytetradecanoyl-[acyl-carrier-protein] and UDP-N-acetyl-alpha-D-glucosamine: step 2/6. Its function is as follows. Involved in the biosynthesis of lipid A, a phosphorylated glycolipid that in bacteria anchors the lipopolysaccharide to the outer membrane of the cell. Lipid A-like molecules in plants may serve as structural components of the outer membranes of mitochondria and/or chloroplasts, or may be involved in signal transduction or plant defense responses (Potential). This is Probable UDP-3-O-acyl-N-acetylglucosamine deacetylase 2, mitochondrial (LPXC2) from Arabidopsis thaliana (Mouse-ear cress).